The primary structure comprises 687 residues: CWF19-like protein 2 homolog (687 aa).

The stretch at 6–51 forms a coiled coil; that stretch reads FESGREKDKARQELREAREAMLQQAKERAELRGQRERQKELRGEAD. Positions 24–50 are enriched in basic and acidic residues; that stretch reads EAMLQQAKERAELRGQRERQKELRGEA. Positions 24 to 281 are disordered; the sequence is EAMLQQAKER…PKSRPSCLTD (258 aa). A compositionally biased stretch (basic residues) spans 66-92; it reads KKSKKNVSKHKSRSKSKSSKKSRKHRN. Positions 93 to 107 are enriched in low complexity; that stretch reads SSSSSESSTSSSSSF. A coiled-coil region spans residues 108-131; it reads SEDEKERKRRKKKSKRSRKESASE. Basic residues predominate over residues 114–125; the sequence is RKRRKKKSKRSR. Phosphoserine occurs at positions 128 and 130. 2 stretches are compositionally biased toward basic and acidic residues: residues 146–157 and 168–180; these read VTKKEPPQRDDW and FSRE…KPNE. The stretch at 290-325 forms a coiled coil; sequence KAIKAELKGKKELAAELNQQLEAARKERAEFIASGE. The segment at 355–383 is disordered; the sequence is VRPLVQSGDPNESYGGRMGPKRGSKKVDT. Residues 444-475 are a coiled coil; that stretch reads KQISASDAEKREMQSAIREHEKLVATLDNCER.

The protein belongs to the CWF19 family.

This chain is CWF19-like protein 2 homolog, found in Drosophila melanogaster (Fruit fly).